The primary structure comprises 260 residues: 3'-5' ssDNA/RNA exonuclease TatD (260 aa).

The a divalent metal cation site is built by glutamate 91, histidine 127, and histidine 152.

Belongs to the metallo-dependent hydrolases superfamily. TatD-type hydrolase family. TatD subfamily. In terms of assembly, monomer. The cofactor is Mg(2+).

The protein resides in the cytoplasm. Functionally, 3'-5' exonuclease that prefers single-stranded DNA and RNA. May play a role in the H(2)O(2)-induced DNA damage repair. In Citrobacter koseri (strain ATCC BAA-895 / CDC 4225-83 / SGSC4696), this protein is 3'-5' ssDNA/RNA exonuclease TatD.